A 224-amino-acid polypeptide reads, in one-letter code: UPF0758 protein RSc2444 (224 aa).

The region spanning 102–224 (TLESPQSVKD…VYSFLEHGKM (123 aa)) is the MPN domain. Zn(2+) is bound by residues His-173, His-175, and Asp-186. The short motif at 173–186 (HNHPTGHVEPSESD) is the JAMM motif element.

It belongs to the UPF0758 family.

This is UPF0758 protein RSc2444 from Ralstonia nicotianae (strain ATCC BAA-1114 / GMI1000) (Ralstonia solanacearum).